The sequence spans 329 residues: D-alanine--D-alanine ligase (329 aa).

The ATP-grasp domain occupies 120–326 (KLWLSAIGIP…FAHYLEQILR (207 aa)). Position 150 to 205 (150 to 205 (ALAKWGKVFIKAASQGSSVGCYSASNETDLLQGIKDAFGYSEQVLIEKAVKPRELE)) interacts with ATP. Mg(2+) is bound by residues Asp280, Glu293, and Asn295.

It belongs to the D-alanine--D-alanine ligase family. Mg(2+) serves as cofactor. It depends on Mn(2+) as a cofactor.

The protein resides in the cytoplasm. The enzyme catalyses 2 D-alanine + ATP = D-alanyl-D-alanine + ADP + phosphate + H(+). It participates in cell wall biogenesis; peptidoglycan biosynthesis. Its function is as follows. Cell wall formation. The polypeptide is D-alanine--D-alanine ligase (Aeromonas salmonicida (strain A449)).